The chain runs to 310 residues: MSNPLYNKNIISITDLSRAELELIVSTANELKQHPRPDLLKNKVIASCFFEASTRTRLSFETAVQRLGGSVIGFPDSGNTSLGKKGETLADSVQVISSYSDAFFMRHNQEGAARLASEFSSVPVINGGDGSNQHPTQTLLDLFSIYETQGTLDKLQVAFVGDLKYGRTVHSLTQALSLFDCEFHFVAPPALSMPEYIIDELKEKGCTFTQYDSLDGVLSKLDILYMTRVQKERFDETEYQHMKSSFILTAQMFEGVKDNLKVLHPLPRVDEITTDVDSTPYAYYFQQAKNGVYARQALLALVLTNEFGDK.

Carbamoyl phosphate-binding residues include R55 and T56. K85 lines the L-aspartate pocket. Carbamoyl phosphate is bound by residues R106, H134, and Q137. The L-aspartate site is built by R167 and R228. The carbamoyl phosphate site is built by L266 and P267.

The protein belongs to the aspartate/ornithine carbamoyltransferase superfamily. ATCase family. In terms of assembly, heterododecamer (2C3:3R2) of six catalytic PyrB chains organized as two trimers (C3), and six regulatory PyrI chains organized as three dimers (R2).

The enzyme catalyses carbamoyl phosphate + L-aspartate = N-carbamoyl-L-aspartate + phosphate + H(+). The protein operates within pyrimidine metabolism; UMP biosynthesis via de novo pathway; (S)-dihydroorotate from bicarbonate: step 2/3. In terms of biological role, catalyzes the condensation of carbamoyl phosphate and aspartate to form carbamoyl aspartate and inorganic phosphate, the committed step in the de novo pyrimidine nucleotide biosynthesis pathway. This chain is Aspartate carbamoyltransferase catalytic subunit 1, found in Shewanella halifaxensis (strain HAW-EB4).